A 310-amino-acid polypeptide reads, in one-letter code: MHALTTVENPSARLLPGVLALIRDVEAADGHEVLEAHRWIDLANADAESLHGIAVTLDDDTVVGYVHLRRHHRHGIELELLVAPDHRDEAASIVGALVEAASASLETLGPHEIFAWVPRHSRQVIDALEGLGFRADRAVRQLRRPLPLESDHPARPIDCPPFRTFRPGEDEDAWLEVNNRAFAWHPDQGDWDLETLLARERESWFDPAGFLLAEQDGRLVGFCWTKVHAPRSSSALGEIYVIATDPERAPRGLGSCLLVAGLDYLAHHDIPTASLYVEDTNERALRLYDRFGFVVDHEDVRLVWRLPAAS.

N-acetyltransferase domains are found at residues 5–155 and 160–309; these read TTVE…HPAR and PPFR…LPAA. 80–82 provides a ligand contact to acetyl-CoA; the sequence is LLV. Residues D187, K226, and E238 each coordinate 1D-myo-inositol 2-(L-cysteinylamino)-2-deoxy-alpha-D-glucopyranoside. Acetyl-CoA is bound at residue 242–244; the sequence is IAT. Y276 serves as a coordination point for 1D-myo-inositol 2-(L-cysteinylamino)-2-deoxy-alpha-D-glucopyranoside. An acetyl-CoA-binding site is contributed by 281–286; that stretch reads NERALR.

Belongs to the acetyltransferase family. MshD subfamily. In terms of assembly, monomer.

The catalysed reaction is 1D-myo-inositol 2-(L-cysteinylamino)-2-deoxy-alpha-D-glucopyranoside + acetyl-CoA = mycothiol + CoA + H(+). Catalyzes the transfer of acetyl from acetyl-CoA to desacetylmycothiol (Cys-GlcN-Ins) to form mycothiol. In Acidimicrobium ferrooxidans (strain DSM 10331 / JCM 15462 / NBRC 103882 / ICP), this protein is Mycothiol acetyltransferase.